Reading from the N-terminus, the 449-residue chain is Methionine aminopeptidase 2 (449 aa).

Residues 1–91 (MAAQAAPELA…PRIPLTTLFP (91 aa)) form a disordered region. The span at 34–50 (EEAENEGDSDDDRDDEQ) shows a compositional bias: acidic residues. The span at 61–75 (KKKKKKRPKKKKKTA) shows a compositional bias: basic residues. His199 lines the substrate pocket. A divalent metal cation contacts are provided by Asp219, Asp230, and His299. His307 provides a ligand contact to substrate. Residues Glu335 and Glu430 each contribute to the a divalent metal cation site.

The protein belongs to the peptidase M24A family. Methionine aminopeptidase eukaryotic type 2 subfamily. Requires Co(2+) as cofactor. Zn(2+) serves as cofactor. The cofactor is Mn(2+). Fe(2+) is required as a cofactor.

Its subcellular location is the cytoplasm. It carries out the reaction Release of N-terminal amino acids, preferentially methionine, from peptides and arylamides.. Cotranslationally removes the N-terminal methionine from nascent proteins. The N-terminal methionine is often cleaved when the second residue in the primary sequence is small and uncharged (Met-Ala-, Cys, Gly, Pro, Ser, Thr, or Val). The sequence is that of Methionine aminopeptidase 2 from Arthroderma benhamiae (strain ATCC MYA-4681 / CBS 112371) (Trichophyton mentagrophytes).